The following is a 77-amino-acid chain: RNA-binding protein Hfq (77 aa).

The 61-residue stretch at 10–70 (DAFLNHVRKA…ISTIMPGQPI (61 aa)) folds into the Sm domain.

This sequence belongs to the Hfq family. In terms of assembly, homohexamer.

RNA chaperone that binds small regulatory RNA (sRNAs) and mRNAs to facilitate mRNA translational regulation in response to envelope stress, environmental stress and changes in metabolite concentrations. Also binds with high specificity to tRNAs. This is RNA-binding protein Hfq from Cereibacter sphaeroides (strain ATCC 17029 / ATH 2.4.9) (Rhodobacter sphaeroides).